Reading from the N-terminus, the 239-residue chain is Orotidine 5'-phosphate decarboxylase (239 aa).

Substrate-binding positions include Asp-11, Lys-33, 60–69 (DLKCHDIPTT), Thr-123, Arg-185, Gln-194, Gly-214, and Arg-215. The Proton donor role is filled by Lys-62.

It belongs to the OMP decarboxylase family. Type 1 subfamily. In terms of assembly, homodimer.

It carries out the reaction orotidine 5'-phosphate + H(+) = UMP + CO2. It participates in pyrimidine metabolism; UMP biosynthesis via de novo pathway; UMP from orotate: step 2/2. Its function is as follows. Catalyzes the decarboxylation of orotidine 5'-monophosphate (OMP) to uridine 5'-monophosphate (UMP). The protein is Orotidine 5'-phosphate decarboxylase of Bacillus licheniformis (strain ATCC 14580 / DSM 13 / JCM 2505 / CCUG 7422 / NBRC 12200 / NCIMB 9375 / NCTC 10341 / NRRL NRS-1264 / Gibson 46).